Here is a 248-residue protein sequence, read N- to C-terminus: Acetoacetyl-CoA reductase (248 aa).

NADP(+) contacts are provided by residues 14–16 (GGI), R42, and 90–94 (NAGIT). Substrate is bound by residues D96 and 149–152 (QFGQ). Y155 acts as the Proton acceptor in catalysis. 185 to 188 (PGYT) contributes to the NADP(+) binding site. Substrate contacts are provided by residues 186-187 (GY) and R197.

It belongs to the short-chain dehydrogenases/reductases (SDR) family.

The protein resides in the cytoplasm. The enzyme catalyses a (3R)-3-hydroxyacyl-CoA + NADP(+) = a 3-oxoacyl-CoA + NADPH + H(+). It participates in biopolymer metabolism; poly-(R)-3-hydroxybutanoate biosynthesis. In Acinetobacter sp. (strain RA3849), this protein is Acetoacetyl-CoA reductase (phaB).